Here is a 216-residue protein sequence, read N- to C-terminus: Cytochrome c biogenesis ATP-binding export protein CcmA (216 aa).

Positions 2–215 (LSVEELSCVR…SNHLRKIKLG (214 aa)) constitute an ABC transporter domain. An ATP-binding site is contributed by 34–41 (GHNGAGKT).

Belongs to the ABC transporter superfamily. CcmA exporter (TC 3.A.1.107) family. As to quaternary structure, the complex is composed of two ATP-binding proteins (CcmA) and two transmembrane proteins (CcmB).

It localises to the cell inner membrane. It carries out the reaction heme b(in) + ATP + H2O = heme b(out) + ADP + phosphate + H(+). Part of the ABC transporter complex CcmAB involved in the biogenesis of c-type cytochromes; once thought to export heme, this seems not to be the case, but its exact role is uncertain. Responsible for energy coupling to the transport system. This chain is Cytochrome c biogenesis ATP-binding export protein CcmA, found in Photobacterium profundum (strain SS9).